A 267-amino-acid polypeptide reads, in one-letter code: Outer membrane protein assembly factor BamD (267 aa).

Residues 1 to 16 (MKKILLTVSLGLALSA) form the signal peptide. A lipid anchor (N-palmitoyl cysteine) is attached at C17. The S-diacylglycerol cysteine moiety is linked to residue C17.

This sequence belongs to the BamD family. In terms of assembly, part of the Bam complex.

It localises to the cell outer membrane. Its function is as follows. Part of the outer membrane protein assembly complex, which is involved in assembly and insertion of beta-barrel proteins into the outer membrane. Required for efficient transformation of Neisseria meningitidis by species-related DNA. This Neisseria meningitidis serogroup B (strain ATCC BAA-335 / MC58) protein is Outer membrane protein assembly factor BamD.